A 248-amino-acid chain; its full sequence is Positive alginate biosynthesis regulatory protein (248 aa).

The 116-residue stretch at 2 to 117 (NVLIVDDEPL…DLAEALKKAS (116 aa)) folds into the Response regulatory domain. At Asp-54 the chain carries 4-aspartylphosphate. The 106-residue stretch at 142 to 247 (ISARTRKGIE…VAGVRRLMHQ (106 aa)) folds into the HTH LytTR-type domain.

Its pathway is glycan biosynthesis; alginate biosynthesis [regulation]. Its function is as follows. Positive regulator of the algD gene, which codes for a GDP-mannose dehydrogenase, a key step enzyme in the alginate biosynthesis pathway. The chain is Positive alginate biosynthesis regulatory protein (algR) from Pseudomonas aeruginosa (strain ATCC 15692 / DSM 22644 / CIP 104116 / JCM 14847 / LMG 12228 / 1C / PRS 101 / PAO1).